We begin with the raw amino-acid sequence, 495 residues long: Alpha,alpha-trehalose-phosphate synthase [UDP-forming] 56 kDa subunit (495 aa).

The D-glucose 6-phosphate site is built by Tyr102 and Asp156. Arg293 and Lys298 together coordinate UDP. Residues Arg293 and Lys298 each contribute to the UDP-alpha-D-glucose site. Residue Arg331 coordinates D-glucose 6-phosphate. UDP-binding positions include Ile370 and 396-400; that span reads LVSYE. UDP-alpha-D-glucose is bound by residues Ile370 and 392 to 400; that span reads DGMNLVSYE.

The protein belongs to the glycosyltransferase 20 family. As to quaternary structure, the trehalose synthase complex is composed of the two catalytic subunits TPS1 and TPS2 and at least one of the two regulatory subunits TPS3 or TSL1.

Its subcellular location is the cytoplasm. The enzyme catalyses D-glucose 6-phosphate + UDP-alpha-D-glucose = alpha,alpha-trehalose 6-phosphate + UDP + H(+). It functions in the pathway carbohydrate biosynthesis. With respect to regulation, activated by fructose 6-phosphate. Inorganic phosphate inhibits the synthase activity in the complex, but activates the synthase activity in the free monomeric form. In terms of biological role, synthase catalytic subunit of the trehalose synthase complex that catalyzes the production of trehalose from glucose-6-phosphate and UDP-alpha-D-glucose in a two step process. Can function independently of the complex. The chain is Alpha,alpha-trehalose-phosphate synthase [UDP-forming] 56 kDa subunit from Saccharomyces cerevisiae (strain ATCC 204508 / S288c) (Baker's yeast).